Consider the following 396-residue polypeptide: Protein ANTAGONIST OF LIKE HETEROCHROMATIN PROTEIN 1 (396 aa).

Basic residues-rich tracts occupy residues 1 to 12 (MAPVKQKKKNKK) and 20 to 29 (KLAKNKEKKR). The tract at residues 1–29 (MAPVKQKKKNKKKPLDKAKKLAKNKEKKR) is disordered. The short motif at 6–13 (QKKKNKKK) is the Nuclear localization signal element. In terms of domain architecture, DDE Tnp4 spans 183–348 (IDTTHIIMTL…IILVCCLLHN (166 aa)).

The protein belongs to the HARBI1 family. As to quaternary structure, interacts with core components of POLYCOMB REPRESSIVE COMPLEX 2 (PRC2), a PcG protein complex with H3K27me3 histone methyltransferase activity. Associates with plant-specific PRC2 accessory components such as MSI1, EMF2, VRN2, FIE and CLF. A divalent metal cation serves as cofactor. As to expression, expressed in roots, inflorescence stems, seedlings, leaves, flower buds, inflorescences, and siliques.

The protein localises to the nucleus. Transposase-derived protein that may have nuclease activity. Antagonist of polycomb-group (PcG) protein-mediated chromatin silencing, probably by preventing the association of POLYCOMB REPRESSIVE COMPLEX 2 (PRC2) with its accessory components. Needed for full reactivation of several floral homeotic genes that are repressed by PcG. This is Protein ANTAGONIST OF LIKE HETEROCHROMATIN PROTEIN 1 from Arabidopsis thaliana (Mouse-ear cress).